We begin with the raw amino-acid sequence, 130 residues long: Fluoride-specific ion channel FluC (130 aa).

A run of 4 helical transmembrane segments spans residues 3–23 (FIFLWAALGGAIGSSLRYFVG), 39–59 (GTFSVNVIGCFVIGFMGHLAV), 67–87 (FGIFFVTGVLGGFTTFSSYGL), and 102–122 (VSYALGTNILGLIGVAIGWFL). Gly77 and Thr80 together coordinate Na(+).

The protein belongs to the fluoride channel Fluc/FEX (TC 1.A.43) family.

The protein localises to the cell inner membrane. The catalysed reaction is fluoride(in) = fluoride(out). With respect to regulation, na(+) is not transported, but it plays an essential structural role and its presence is essential for fluoride channel function. Fluoride-specific ion channel. Important for reducing fluoride concentration in the cell, thus reducing its toxicity. This is Fluoride-specific ion channel FluC from Helicobacter pylori (strain Shi470).